Here is a 106-residue protein sequence, read N- to C-terminus: Small ribosomal subunit protein bS18 (106 aa).

A compositionally biased stretch (basic and acidic residues) spans 1–22 (MSEETTVRPERTERSERPERPQ). Residues 1 to 34 (MSEETTVRPERTERSERPERPQYRGNGPRKRRPF) are disordered.

It belongs to the bacterial ribosomal protein bS18 family. As to quaternary structure, part of the 30S ribosomal subunit. Forms a tight heterodimer with protein bS6.

In terms of biological role, binds as a heterodimer with protein bS6 to the central domain of the 16S rRNA, where it helps stabilize the platform of the 30S subunit. This Geobacter metallireducens (strain ATCC 53774 / DSM 7210 / GS-15) protein is Small ribosomal subunit protein bS18.